The sequence spans 368 residues: Phosphate acyltransferase (368 aa).

Belongs to the PlsX family. In terms of assembly, homodimer. Probably interacts with PlsY.

The protein localises to the cytoplasm. The enzyme catalyses a fatty acyl-[ACP] + phosphate = an acyl phosphate + holo-[ACP]. Its pathway is lipid metabolism; phospholipid metabolism. In terms of biological role, catalyzes the reversible formation of acyl-phosphate (acyl-PO(4)) from acyl-[acyl-carrier-protein] (acyl-ACP). This enzyme utilizes acyl-ACP as fatty acyl donor, but not acyl-CoA. The polypeptide is Phosphate acyltransferase (Herpetosiphon aurantiacus (strain ATCC 23779 / DSM 785 / 114-95)).